We begin with the raw amino-acid sequence, 360 residues long: Flavone O-methyltransferase 1 (360 aa).

127-133 (MNQDKVL) is a substrate binding site. Residues 159–177 (AFEYHGTDPRFNRVFNEGM) are substrate binding. The S-adenosyl-L-methionine site is built by Gly-205, Asp-228, Asp-248, Met-249, and Lys-262. His-266 serves as the catalytic Proton acceptor.

This sequence belongs to the class I-like SAM-binding methyltransferase superfamily. Cation-independent O-methyltransferase family. COMT subfamily. As to quaternary structure, homodimer.

Flavone-specific O-methyltransferase with a preference for flavones &gt; flavonols. Active with tricetin, luteolin, quercitin and eriodictyol. Very low activity with phenylpropanoids (5-hydroxyferulic acid and caffeic acid). Catalyzes the sequential O-methylation of tricetin via 3'-O-methyltricetin, 3',5'-O-methyltricetin to 3',4',5'-O-trimethyltricetin. The chain is Flavone O-methyltransferase 1 (OMT1) from Triticum aestivum (Wheat).